We begin with the raw amino-acid sequence, 81 residues long: Beta-toxin Ct13 (81 aa).

An N-terminal signal peptide occupies residues 1-18; it reads MKVLILIIASVLLIGVEC. In terms of domain architecture, LCN-type CS-alpha/beta spans 19-78; the sequence is KDGFPVDSEGCILLPCATRAYCSVNCKFMKGSGGSCDTLACHCKGLPEDAKVQDKPTNKC. 4 disulfides stabilise this stretch: Cys-29–Cys-78, Cys-34–Cys-54, Cys-40–Cys-59, and Cys-44–Cys-61. Cys-78 carries the post-translational modification Cysteine amide.

Belongs to the long (4 C-C) scorpion toxin superfamily. Sodium channel inhibitor family. Beta subfamily. As to expression, expressed by the venom gland.

The protein localises to the secreted. Functionally, beta toxins bind voltage-independently at site-4 of sodium channels (Nav) and shift the voltage of activation toward more negative potentials thereby affecting sodium channel activation and promoting spontaneous and repetitive firing. The chain is Beta-toxin Ct13 from Centruroides tecomanus (Scorpion).